A 182-amino-acid chain; its full sequence is Ribosome-recycling factor (182 aa).

It belongs to the RRF family.

The protein resides in the cytoplasm. Functionally, responsible for the release of ribosomes from messenger RNA at the termination of protein biosynthesis. May increase the efficiency of translation by recycling ribosomes from one round of translation to another. The polypeptide is Ribosome-recycling factor (Prochlorococcus marinus (strain MIT 9312)).